We begin with the raw amino-acid sequence, 221 residues long: MAASRPLSRFWEWGKNIVCVGRNYADHVREMRSAVLSEPVLFLKPSTAYAPEGSPILMPAYTRNLHHELELGVVMGRRCRAVPEAAAMDYVGGYALCLDMTARDVQDECKKKGLPWTLAKSFTASCPVSAFVPKEKIPDPHKLKLWLKVNGELRQEGETSSMIFSIPYIISYVSKIITLEEGDIILTGTPKGVGPVKENDEIEAGIHGLVSMRFKVEKPEY.

The N-terminal 24 residues, 1–24 (MAASRPLSRFWEWGKNIVCVGRNY), are a transit peptide targeting the mitochondrion. The residue at position 37 (S37) is a Phosphoserine. Mg(2+) contacts are provided by E68, E70, and D99. K110 carries the N6-acetyllysine modification. N6-succinyllysine is present on K112.

Belongs to the FAH family. As to quaternary structure, homodimer. Mg(2+) serves as cofactor. The cofactor is Mn(2+).

It is found in the mitochondrion. Its subcellular location is the cytoplasm. The protein localises to the cytosol. The enzyme catalyses oxaloacetate = enol-oxaloacetate. It carries out the reaction oxaloacetate + H(+) = pyruvate + CO2. The catalysed reaction is a 3-acylpyruvate + H2O = a carboxylate + pyruvate + H(+). It catalyses the reaction acetylpyruvate + H2O = acetate + pyruvate + H(+). The enzyme catalyses 3-fumarylpyruvate + H2O = fumarate + pyruvate + H(+). With respect to regulation, oxaloacetate decarboxylation is competitively inhibited by oxalate. In terms of biological role, tautomerase that converts enol-oxaloacetate, a strong inhibitor of succinate dehydrogenase, to the physiological keto form of oxaloacetate. It is thereby required to maximize aerobic respiration efficiency by preventing succinate dehydrogenase inhibition. Also acts as a weak oxaloacetate decarboxylase (ODx), catalyzing the decarboxylation of oxaloacetate (OAA) to pyruvate and CO(2), and as such is likely a regulatory enzyme in the TCA cycle. Also displays acylpyruvase activity, being able to hydrolyze acetylpyruvate and fumarylpyruvate in vitro. This is Oxaloacetate tautomerase FAHD1, mitochondrial (FAHD1) from Pongo abelii (Sumatran orangutan).